The chain runs to 156 residues: Small ribosomal subunit protein uS7 (156 aa).

This sequence belongs to the universal ribosomal protein uS7 family. Part of the 30S ribosomal subunit. Contacts proteins S9 and S11.

Functionally, one of the primary rRNA binding proteins, it binds directly to 16S rRNA where it nucleates assembly of the head domain of the 30S subunit. Is located at the subunit interface close to the decoding center, probably blocks exit of the E-site tRNA. The protein is Small ribosomal subunit protein uS7 of Aster yellows witches'-broom phytoplasma (strain AYWB).